A 703-amino-acid polypeptide reads, in one-letter code: Elongation factor G 1 (703 aa).

The 284-residue stretch at 8 to 291 folds into the tr-type G domain; sequence ERYRNIGISA…AVIDYLPSPV (284 aa). Residues 17-24, 88-92, and 142-145 contribute to the GTP site; these read AHIDAGKT, DTPGH, and NKMD.

Belongs to the TRAFAC class translation factor GTPase superfamily. Classic translation factor GTPase family. EF-G/EF-2 subfamily.

The protein resides in the cytoplasm. Catalyzes the GTP-dependent ribosomal translocation step during translation elongation. During this step, the ribosome changes from the pre-translocational (PRE) to the post-translocational (POST) state as the newly formed A-site-bound peptidyl-tRNA and P-site-bound deacylated tRNA move to the P and E sites, respectively. Catalyzes the coordinated movement of the two tRNA molecules, the mRNA and conformational changes in the ribosome. This chain is Elongation factor G 1, found in Burkholderia orbicola (strain AU 1054).